Here is a 68-residue protein sequence, read N- to C-terminus: Putative membrane protein insertion efficiency factor (68 aa).

The protein belongs to the UPF0161 family.

The protein resides in the cell inner membrane. Could be involved in insertion of integral membrane proteins into the membrane. This is Putative membrane protein insertion efficiency factor from Aquifex aeolicus (strain VF5).